We begin with the raw amino-acid sequence, 142 residues long: Hemoglobin F-I (142 aa).

One can recognise a Globin domain in the interval 2–142; the sequence is GLTTAQIKAI…AAGVLVAAMK (141 aa). Heme b is bound at residue histidine 95.

The protein belongs to the globin family. As to quaternary structure, homotetramer.

In terms of biological role, hemoglobin F-I appears to function in storage, rather than transport of oxygen. The chain is Hemoglobin F-I from Urechis caupo (Innkeeper worm).